An 847-amino-acid chain; its full sequence is MEPLKSLFLKSPLGSWNGSGSGGGGGGGGGRPEGSPKAAGYANPVWTALFDYEPSGQDELALRKGDRVEVLSRDAAISGDEGWWAGQVGGQVGIFPSNYVSRGGGPPPCEVASFQELRLEEVIGIGGFGKVYRGSWRGELVAVKAARQDPDEDISVTAESVRQEARLFAMLAHPNIIALKAVCLEEPNLCLVMEYAAGGPLSRALAGRRVPPHVLVNWAVQIARGMHYLHCEALVPVIHRDLKSNNILLLQPIESDDMEHKTLKITDFGLAREWHKTTQMSAAGTYAWMAPEVIKASTFSKGSDVWSFGVLLWELLTGEVPYRGIDCLAVAYGVAVNKLTLPIPSTCPEPFAQLMADCWAQDPHRRPDFASILQQLEALEAQVLREMPRDSFHSMQEGWKREIQGLFDELRAKEKELLSREEELTRAAREQRSQAEQLRRREHLLAQWELEVFERELTLLLQQVDRERPHVRRRRGTFKRSKLRARDGGERISMPLDFKHRITVQASPGLDRRRNVFEVGPGDSPTFPRFRAIQLEPAEPGQAWGRQSPRRLEDSSNGERRACWAWGPSSPKPGEAQNGRRRSRMDEATWYLDSDDSSPLGSPSTPPALNGNPPRPSLEPEEPKRPVPAERGSSSGTPKLIQRALLRGTALLASLGLGRDLQPPGGPGRERGESPTTPPTPTPAPCPTEPPPSPLICFSLKTPDSPPTPAPLLLDLGIPVGQRSAKSPRREEEPRGGTVSPPPGTSRSAPGTPGTPRSPPLGLISRPRPSPLRSRIDPWSFVSAGPRPSPLPSPQPAPRRAPWTLFPDSDPFWDSPPANPFQGGPQDCRAQTKDMGAQAPWVPEAGP.

Ser-11 is modified (phosphoserine). Residues 11 to 38 (SPLGSWNGSGSGGGGGGGGGRPEGSPKA) form a disordered region. Over residues 17 to 32 (NGSGSGGGGGGGGGRP) the composition is skewed to gly residues. Ser-35 bears the Phosphoserine mark. The SH3 domain maps to 41–105 (YANPVWTALF…PSNYVSRGGG (65 aa)). One can recognise a Protein kinase domain in the interval 117–379 (LRLEEVIGIG…ASILQQLEAL (263 aa)). ATP is bound by residues 123–131 (IGIGGFGKV) and Lys-144. Catalysis depends on Asp-241, which acts as the Proton acceptor. At Thr-277 the chain carries Phosphothreonine; by autocatalysis. A Phosphoserine; by autocatalysis and MAP4K1 modification is found at Ser-281. Ser-394 bears the Phosphoserine mark. Leucine-zipper regions lie at residues 403–424 (IQGL…EEEL) and 438–459 (LRRR…ELTL). Ser-507, Ser-524, Ser-548, Ser-555, and Ser-556 each carry phosphoserine. The segment at 537-643 (PAEPGQAWGR…SSGTPKLIQR (107 aa)) is disordered. Residues 550–562 (RRLEDSSNGERRA) are compositionally biased toward basic and acidic residues. The segment covering 597–609 (SSPLGSPSTPPAL) has biased composition (low complexity). Phosphoserine is present on residues Ser-654, Ser-693, and Ser-705. The tract at residues 655-847 (LGLGRDLQPP…QAPWVPEAGP (193 aa)) is disordered. The segment covering 676–694 (TTPPTPTPAPCPTEPPPSP) has biased composition (pro residues). Thr-708 carries the phosphothreonine modification. Phosphoserine is present on residues Ser-724, Ser-727, Ser-740, Ser-748, Ser-758, Ser-770, Ser-789, Ser-793, and Ser-815. Low complexity predominate over residues 760-773 (PLGLISRPRPSPLR). The segment covering 787–799 (RPSPLPSPQPAPR) has biased composition (pro residues). Over residues 800 to 816 (RAPWTLFPDSDPFWDSP) the composition is skewed to low complexity.

This sequence belongs to the protein kinase superfamily. STE Ser/Thr protein kinase family. MAP kinase kinase kinase subfamily. In terms of assembly, homodimer; undergoes dimerization during activation. Interacts with MAP2K4/MKK4. Interacts with MAP2K7/MKK7. Found in a complex with SH3RF1, RAC1, MAP2K7/MKK7, MAPK8IP1/JIP1 and MAPK8/JNK1. Mg(2+) serves as cofactor. Post-translationally, autophosphorylation on serine and threonine residues within the activation loop plays a role in enzyme activation. Thr-277 is likely to be the main autophosphorylation site. Phosphorylation of Ser-555 and Ser-556 is induced by CDC42. In terms of tissue distribution, expressed in a wide variety of normal and neoplastic tissues including fetal lung, liver, heart and kidney, and adult lung, liver, heart, kidney, placenta, skeletal muscle, pancreas and brain.

The protein resides in the cytoplasm. It is found in the cytoskeleton. It localises to the microtubule organizing center. The protein localises to the centrosome. The enzyme catalyses L-seryl-[protein] + ATP = O-phospho-L-seryl-[protein] + ADP + H(+). It catalyses the reaction L-threonyl-[protein] + ATP = O-phospho-L-threonyl-[protein] + ADP + H(+). Homodimerization via the leucine zipper domains is required for autophosphorylation and subsequent activation. In terms of biological role, activates the JUN N-terminal pathway. Required for serum-stimulated cell proliferation and for mitogen and cytokine activation of MAPK14 (p38), MAPK3 (ERK) and MAPK8 (JNK1) through phosphorylation and activation of MAP2K4/MKK4 and MAP2K7/MKK7. Plays a role in mitogen-stimulated phosphorylation and activation of BRAF, but does not phosphorylate BRAF directly. Influences microtubule organization during the cell cycle. The polypeptide is Mitogen-activated protein kinase kinase kinase 11 (Homo sapiens (Human)).